The sequence spans 440 residues: MTTDVKAKNPASIFSHETLLHVLNDLSAHDLAALERVSRSWNSIVRRSSVWHNLYLSEFGTKHLRRHGRIEKKRRNWKGLFRRQSNWKDGRCKKVESMLPQLLNSEKSVGEDRLGLTLTHQNNIYFCNDVQISKWSSVGNSLKCQAISSFRDETVKSGPAVMCLDNASLYIGLKDGNLLHVTVHETGFGNIENLATFSTKFVALSSHKNYICGLTNDNNLYILQHSHQAGTKLKVLGKYHVSSIEKQVAIHFQQSKEGYEVVHVVFNDYVLSGGWTVSLQEFVFNEYCVKSSRLALHDNKDIEYSQQPASAIFMYGSYILTSHPDNSLILQRLYSTNNELRIKFLGRLLGHVCGVQISKLFSCGRIVSVSKNCADICVWDLHDTNYQSIVSPLMLTCTNIHNKPVSDYEKECKVQDIGLYEDTILITLSDGRILKFLFNI.

The 47-residue stretch at 8–54 folds into the F-box domain; that stretch reads KNPASIFSHETLLHVLNDLSAHDLAALERVSRSWNSIVRRSSVWHNL.

As to quaternary structure, interacts with skp1.

It localises to the nucleus. The protein is F-box protein pof12 (pof12) of Schizosaccharomyces pombe (strain 972 / ATCC 24843) (Fission yeast).